Reading from the N-terminus, the 607-residue chain is Arginine--tRNA ligase, cytoplasmic (607 aa).

Ala2 is modified (N-acetylalanine). A Phosphoserine modification is found at Ser15. Interaction with tRNA regions lie at residues 59–60 (EW) and 106–111 (NGPFIQ). L-arginine-binding positions include 148–153 (EFSSPN), His162, Tyr347, Asp351, and Gln375. Positions 151 to 162 (SPNIAKPFHAGH) match the 'HIGH' region motif. The segment at 484-498 (DTGPYLQYAHSRLRS) is interaction with tRNA.

It belongs to the class-I aminoacyl-tRNA synthetase family. As to quaternary structure, monomer.

The protein localises to the cytoplasm. The protein resides in the cytosol. The enzyme catalyses tRNA(Arg) + L-arginine + ATP = L-arginyl-tRNA(Arg) + AMP + diphosphate. In terms of biological role, forms part of a macromolecular complex that catalyzes the attachment of specific amino acids to cognate tRNAs during protein synthesis. The sequence is that of Arginine--tRNA ligase, cytoplasmic from Saccharomyces cerevisiae (strain ATCC 204508 / S288c) (Baker's yeast).